The following is a 211-amino-acid chain: Uridine kinase (211 aa).

Position 12–19 (12–19 (GGSGSGKT)) interacts with ATP.

Belongs to the uridine kinase family.

It localises to the cytoplasm. The enzyme catalyses uridine + ATP = UMP + ADP + H(+). It carries out the reaction cytidine + ATP = CMP + ADP + H(+). Its pathway is pyrimidine metabolism; CTP biosynthesis via salvage pathway; CTP from cytidine: step 1/3. It functions in the pathway pyrimidine metabolism; UMP biosynthesis via salvage pathway; UMP from uridine: step 1/1. This Bacillus subtilis (strain 168) protein is Uridine kinase (udk).